The sequence spans 543 residues: Chaperonin GroEL (543 aa).

Residues 29–32, 86–90, glycine 413, 476–478, and aspartate 492 contribute to the ATP site; these read TLGP, DGTTT, and NAA.

It belongs to the chaperonin (HSP60) family. As to quaternary structure, forms a cylinder of 14 subunits composed of two heptameric rings stacked back-to-back. Interacts with the co-chaperonin GroES.

The protein localises to the cytoplasm. It carries out the reaction ATP + H2O + a folded polypeptide = ADP + phosphate + an unfolded polypeptide.. Its function is as follows. Together with its co-chaperonin GroES, plays an essential role in assisting protein folding. The GroEL-GroES system forms a nano-cage that allows encapsulation of the non-native substrate proteins and provides a physical environment optimized to promote and accelerate protein folding. The chain is Chaperonin GroEL from Streptococcus pyogenes serotype M18 (strain MGAS8232).